The sequence spans 549 residues: 65-kDa microtubule-associated protein 9 (549 aa).

Coiled coils occupy residues 36 to 123 (IEIE…ERKI), 160 to 199 (SLRK…CSVL), and 459 to 492 (GNRL…HQGQ). The interval 474 to 549 (EEKEQERRRK…SFSTPLSRHG (76 aa)) is disordered. A compositionally biased stretch (basic residues) spans 481 to 490 (RRKRDLKKHQ). Ser501 and Ser546 each carry phosphoserine. Positions 514–549 (VSTNKRFVSSPHTPQTDSPHSAKSNQSFSTPLSRHG) are enriched in polar residues.

The protein belongs to the MAP65/ASE1 family. As to quaternary structure, forms dimer. Binds to microtubules (MT).

It is found in the nucleus. The protein localises to the cytoplasm. The protein resides in the cytoskeleton. Its subcellular location is the spindle pole. The protein is 65-kDa microtubule-associated protein 9 (MAP65-9) of Arabidopsis thaliana (Mouse-ear cress).